Consider the following 357-residue polypeptide: NADH-quinone oxidoreductase subunit H (357 aa).

8 helical membrane-spanning segments follow: residues 20–40 (WLVL…ILCV), 92–112 (ILFV…WAVV), 127–147 (LLYV…AGWA), 165–185 (VSYE…SGSL), 206–226 (FLSW…ISAV), 254–274 (MAFA…SCMA), 294–314 (IPGW…FVWF), and 329–349 (LGWK…AIWM).

It belongs to the complex I subunit 1 family. NDH-1 is composed of 14 different subunits. Subunits NuoA, H, J, K, L, M, N constitute the membrane sector of the complex.

It is found in the cell inner membrane. It carries out the reaction a quinone + NADH + 5 H(+)(in) = a quinol + NAD(+) + 4 H(+)(out). Functionally, NDH-1 shuttles electrons from NADH, via FMN and iron-sulfur (Fe-S) centers, to quinones in the respiratory chain. The immediate electron acceptor for the enzyme in this species is believed to be ubiquinone. Couples the redox reaction to proton translocation (for every two electrons transferred, four hydrogen ions are translocated across the cytoplasmic membrane), and thus conserves the redox energy in a proton gradient. This subunit may bind ubiquinone. This Bordetella petrii (strain ATCC BAA-461 / DSM 12804 / CCUG 43448) protein is NADH-quinone oxidoreductase subunit H.